Consider the following 295-residue polypeptide: Manganese transport system membrane protein MntD (295 aa).

Transmembrane regions (helical) follow at residues 7-27 (IIAT…FLVL), 42-62 (LLGI…YMFI), 63-83 (GAAA…SKGV), 87-107 (AAIG…LSVY), 138-158 (IGPK…VLIS), 174-194 (ALAL…MLSL), 203-223 (VGAV…HLLT), 227-247 (LYML…GYFF), and 253-273 (VSIS…AFLF).

This sequence belongs to the ABC-3 integral membrane protein family. The complex is probably composed of two ATP-binding proteins (MntB), two transmembrane proteins (MntC and MntD) and a solute-binding protein (MntA).

The protein resides in the cell membrane. In terms of biological role, probably part of the ABC transporter complex MntABCD involved in manganese import. Probably responsible for the translocation of the substrate across the membrane. The protein is Manganese transport system membrane protein MntD of Bacillus subtilis (strain 168).